The primary structure comprises 205 residues: Protein PAXX (205 aa).

Residues 39–81 (FNLYVTDAAELWSTCFSPDSLARLKARFGLSGAEDIHSRFRAA) form the PISA domain. A Phosphothreonine modification is found at T147. Residues 147-159 (TITSPKKNTQPAG) show a composition bias toward polar residues. Residues 147–205 (TITSPKKNTQPAGTQFLPELDHQRGSSGPGVRRRCPGESLINPGFKSKKPAAGVDFDET) form a disordered region. S150 carries the post-translational modification Phosphoserine. The segment at 172-205 (SSGPGVRRRCPGESLINPGFKSKKPAAGVDFDET) is mediates interaction with XRCC5/Ku80 and XRCC6/Ku70 and association with the non-homologous end joining core complex. The short motif at 191-205 (FKSKKPAAGVDFDET) is the XLM element.

This sequence belongs to the XRCC4-XLF family. PAXX subfamily. Homodimer. Interacts with the DNA-bound XRCC5/Ku80 and XRCC6/Ku70 heterodimer (Ku complex); the interaction is direct. Associated component of the non-homologous end joining (NHEJ) complex, composed of the core proteins PRKDC, LIG4, XRCC4, XRCC6/Ku70, XRCC5/Ku86 and NHEJ1/XLF. Interacts with POLL (DNA polymerase lambda); promoting POLL recruitment to double-strand breaks (DSBs) and stimulation of the end-filling activity of POLL. Post-translationally, phosphorylation may inhibit interaction with the DNA-bound XRCC5/Ku80 and XRCC6/Ku70 heterodimer (Ku complex).

Its subcellular location is the nucleus. It is found in the chromosome. Functionally, non-essential DNA repair protein involved in DNA non-homologous end joining (NHEJ); participates in double-strand break (DSB) repair and V(D)J recombination. May act as a scaffold required for accumulation of the Ku heterodimer, composed of XRCC5/Ku80 and XRCC6/Ku70, at double-strand break sites and promote the assembly and/or stability of the NHEJ machinery. Involved in NHEJ by promoting the ligation of blunt-ended DNA ends. Together with NHEJ1/XLF, collaborates with DNA polymerase lambda (POLL) to promote joining of non-cohesive DNA ends. Constitutes a non-essential component of classical NHEJ: has a complementary but distinct function with NHEJ1/XLF in DNA repair. The protein is Protein PAXX of Mus musculus (Mouse).